Consider the following 263-residue polypeptide: 5'-nucleotidase SurE (263 aa).

The a divalent metal cation site is built by Asp-8, Asp-9, Ser-40, and Asn-93.

This sequence belongs to the SurE nucleotidase family. A divalent metal cation is required as a cofactor.

It localises to the cytoplasm. The catalysed reaction is a ribonucleoside 5'-phosphate + H2O = a ribonucleoside + phosphate. Functionally, nucleotidase that shows phosphatase activity on nucleoside 5'-monophosphates. In Caulobacter vibrioides (strain ATCC 19089 / CIP 103742 / CB 15) (Caulobacter crescentus), this protein is 5'-nucleotidase SurE.